A 175-amino-acid polypeptide reads, in one-letter code: Large ribosomal subunit protein uL10 (175 aa).

The protein belongs to the universal ribosomal protein uL10 family. Part of the ribosomal stalk of the 50S ribosomal subunit. The N-terminus interacts with L11 and the large rRNA to form the base of the stalk. The C-terminus forms an elongated spine to which L12 dimers bind in a sequential fashion forming a multimeric L10(L12)X complex.

Functionally, forms part of the ribosomal stalk, playing a central role in the interaction of the ribosome with GTP-bound translation factors. The protein is Large ribosomal subunit protein uL10 (rplJ) of Xylella fastidiosa (strain 9a5c).